Here is a 1229-residue protein sequence, read N- to C-terminus: MSPAAAAAGAGERRRPIASVRDGRGRGCGGPAGAALLGLSLVGLLLYLVPAAAALAWLAVGTTAAWWGLSREPRGSRPLSSFVQKARHRRTLFASPPAKSTANGNLLEPRTLLEGPDPAELLLMGSYLGKPGPPQPAPAPEGQDLRNRPGRRPPARPAPRSTPPSQPTHRVHHFYPSLPTPLLRPSGRPSPRDRGTLPDRFVITPRRRYPIHQTQYSCPGVLPTVCWNGYHKKAVLSPRNSRMVCSPVTVRIAPPDRRFSRSAIPEQIISSTLSSPSSNAPDPCAKETVLSALKEKKKKRTVEEEDQIFLDGQENKRRRHDSSGSGHSAFEPLVASGVPASFVPKPGSLKRGLNSQSSDDHLNKRSRSSSMSSLTGAYTSGIPSSSRNAITSSYSSTRGISQLWKRNGPSSSPFSSPASSRSQTPERPAKKIREEELCHHSSSSTPLAADKESQGEKAADTTPRKKQNSNSQSTPGSSGQRKRKVQLLPSRRGEQLTLPPPPQLGYSITAEDLDLEKKASLQWFNQALEDKSDAASNSVTETPPTTQPSFTFTLPAAATASPPTSLLAPSTNPLLESLKKMQTPPSLPPCPESAGAATTEALSPPKTPSLLPPLGLSQSGPPGLLPSPSFDSKPPTTLLGLIPAPSMVPATDTKAPPTLQAETATKPQATSAPSPAPKQSFLFGTQNTSPSSPAAPAASSASPMFKPIFTAPPKSEKEGLTPPGPSVSATAPSSSSLPTTTSTTAPTFQPVFSSMGPPASVPLPAPFFKQTTTPATAPTTTAPLFTGLASATSAVAPITSASPSTDSASKPAFGFGINSVSSSSVSTTTSTATAASQPFLFGAPQASAASFTPAMGSIFQFGKPPALPTTTTVTTFSQSLPTAVPTATSSSAADFSGFGSTLATSAPATSSQPTLTFSNTSTPTFNIPFGSSAKSPLPSYPGANPQPAFGAAEGQPPGAAKPALTPSFGSSFTFGNSAAPAPATAPTPAPASTIKIVPAHVPTPIQPTFGGATHSAFGLKATASAFGAPASSQPAFGGSTAVFSFGAATSSGFGATTQTASSGSSSSVFGSTTPSPFTFGGSAAPAGSGSFGINVATPGSSATTGAFSFGAGQSGSTATSTPFTGGLGQNALGTTGQSTPFAFNVGSTTESKPVFGGTATPTFGQNTPAPGVGTSGSSLSFGASSAPAQGFVGVGPFGSAAPSFSIGAGSKTPGARQRLQARRQHTRKK.

Low complexity predominate over residues 1–10 (MSPAAAAAGA). Residues 1-24 (MSPAAAAAGAGERRRPIASVRDGR) form a disordered region. A cisternal side region spans residues 1–40 (MSPAAAAAGAGERRRPIASVRDGRGRGCGGPAGAALLGLS). Residues 1 to 398 (MSPAAAAAGA…AITSSYSSTR (398 aa)) are required for targeting to the nucleus and nuclear pore complex. The segment covering 11 to 24 (GERRRPIASVRDGR) has biased composition (basic and acidic residues). The chain crosses the membrane as a helical span at residues 41-61 (LVGLLLYLVPAAAALAWLAVG). The interval 62 to 1229 (TTAAWWGLSR…QARRQHTRKK (1168 aa)) is pore side. Ser-81 bears the Phosphoserine mark. Disordered stretches follow at residues 90-200 (RTLF…LPDR), 296-507 (KKKK…LGYS), 579-747 (KKMQ…TAPT), 936-966 (PLPS…ALTP), and 1202-1229 (PSFS…TRKK). The segment covering 155-166 (ARPAPRSTPPSQ) has biased composition (pro residues). Low complexity predominate over residues 176–189 (PSLPTPLLRPSGRP). Phosphoserine occurs at positions 322, 328, 348, 370, and 373. Positions 374-400 (LTGAYTSGIPSSSRNAITSSYSSTRGI) are enriched in polar residues. The segment covering 409–422 (PSSSPFSSPASSRS) has biased composition (low complexity). Basic and acidic residues-rich tracts occupy residues 427–439 (RPAK…ELCH) and 449–463 (ADKE…DTTP). Over residues 468-479 (NSNSQSTPGSSG) the composition is skewed to polar residues. Residues 612-629 (PPLGLSQSGPPGLLPSPS) are compositionally biased toward low complexity. Polar residues predominate over residues 660 to 673 (QAETATKPQATSAP). Composition is skewed to low complexity over residues 689–703 (SPSS…SASP) and 726–747 (SVSA…TAPT). The segment covering 1219 to 1229 (LQARRQHTRKK) has biased composition (basic residues).

The protein belongs to the POM121 family.

It is found in the nucleus. The protein localises to the nuclear pore complex. The protein resides in the nucleus membrane. Its subcellular location is the endoplasmic reticulum membrane. Its function is as follows. Essential component of the nuclear pore complex (NPC). The repeat-containing domain may be involved in anchoring components of the pore complex to the pore membrane. When overexpressed in cells induces the formation of cytoplasmic annulate lamellae (AL). This is Nuclear envelope pore membrane protein POM 121C (POM121C) from Homo sapiens (Human).